A 350-amino-acid polypeptide reads, in one-letter code: Protein RecA (350 aa).

65 to 72 provides a ligand contact to ATP; sequence GPESSGKT.

The protein belongs to the RecA family.

The protein localises to the cytoplasm. In terms of biological role, can catalyze the hydrolysis of ATP in the presence of single-stranded DNA, the ATP-dependent uptake of single-stranded DNA by duplex DNA, and the ATP-dependent hybridization of homologous single-stranded DNAs. It interacts with LexA causing its activation and leading to its autocatalytic cleavage. The sequence is that of Protein RecA from Nautilia profundicola (strain ATCC BAA-1463 / DSM 18972 / AmH).